A 144-amino-acid chain; its full sequence is MPRHHQKKSSASGGGSQRQLRVGEQVRHAMAEILAQGNVHDADLEGHIVTVPEVRMSPDLKLATIYVMPLGGRDTEIVIAALERNKKFLRGEVARRVNLKFAPDVRFRVDERFDEAERIEKLLRTPAVQKDLEQDPDSDREEEQ.

Disordered stretches follow at residues 1–22 (MPRH…QLRV) and 125–144 (TPAV…EEEQ). The segment covering 134 to 144 (QDPDSDREEEQ) has biased composition (acidic residues).

It belongs to the RbfA family. As to quaternary structure, monomer. Binds 30S ribosomal subunits, but not 50S ribosomal subunits or 70S ribosomes.

It is found in the cytoplasm. In terms of biological role, one of several proteins that assist in the late maturation steps of the functional core of the 30S ribosomal subunit. Associates with free 30S ribosomal subunits (but not with 30S subunits that are part of 70S ribosomes or polysomes). Required for efficient processing of 16S rRNA. May interact with the 5'-terminal helix region of 16S rRNA. The sequence is that of Ribosome-binding factor A from Bradyrhizobium diazoefficiens (strain JCM 10833 / BCRC 13528 / IAM 13628 / NBRC 14792 / USDA 110).